The following is a 323-amino-acid chain: tRNA dimethylallyltransferase (323 aa).

12-19 (GPTAAGKT) provides a ligand contact to ATP. 14-19 (TAAGKT) serves as a coordination point for substrate. 2 interaction with substrate tRNA regions span residues 37–40 (DSAL) and 161–165 (QRLIR).

Belongs to the IPP transferase family. Monomer. It depends on Mg(2+) as a cofactor.

The enzyme catalyses adenosine(37) in tRNA + dimethylallyl diphosphate = N(6)-dimethylallyladenosine(37) in tRNA + diphosphate. Functionally, catalyzes the transfer of a dimethylallyl group onto the adenine at position 37 in tRNAs that read codons beginning with uridine, leading to the formation of N6-(dimethylallyl)adenosine (i(6)A). This is tRNA dimethylallyltransferase from Pseudomonas entomophila (strain L48).